A 208-amino-acid chain; its full sequence is Putative 3-methyladenine DNA glycosylase (208 aa).

This sequence belongs to the DNA glycosylase MPG family.

The protein is Putative 3-methyladenine DNA glycosylase of Nitrobacter winogradskyi (strain ATCC 25391 / DSM 10237 / CIP 104748 / NCIMB 11846 / Nb-255).